A 362-amino-acid polypeptide reads, in one-letter code: Oryzain gamma chain (362 aa).

The first 24 residues, 1 to 24 (MAHRRIILLLAAAAVAATSAVAAA), serve as a signal peptide directing secretion. Positions 25–144 (SSGFDDSNPI…GNHRMRDAAA (120 aa)) are cleaved as a propeptide — activation peptide. Asn128 carries N-linked (GlcNAc...) asparagine glycosylation. 2 disulfide bridges follow: Cys166–Cys209 and Cys200–Cys242. Cys169 is an active-site residue. Asn258 carries an N-linked (GlcNAc...) asparagine glycan. Cys300 and Cys350 are joined by a disulfide. Residues His309 and Asn329 contribute to the active site.

The protein belongs to the peptidase C1 family. Expressed only in seeds.

This Oryza sativa subsp. japonica (Rice) protein is Oryzain gamma chain.